Here is a 58-residue protein sequence, read N- to C-terminus: Small ribosomal subunit protein bS21 (58 aa).

The disordered stretch occupies residues 39–58 (EKPSVKRKRKSEVARKRKKF). A compositionally biased stretch (basic residues) spans 43-58 (VKRKRKSEVARKRKKF).

It belongs to the bacterial ribosomal protein bS21 family.

The chain is Small ribosomal subunit protein bS21 from Streptococcus pneumoniae (strain ATCC BAA-255 / R6).